We begin with the raw amino-acid sequence, 185 residues long: MINEIKKEAQERMGKTLEALGHAFAKIRTGRAHPSILDSVMVSYYGADTPLRQVANVTVEDSRTLALAVFDKSMIQAVEKAIMTSDLGLNPATAGTTIRVPMPALTEETRKGYTKQARAEAEQARVSVRNIRRDALAQLKDLQKEKEISEDDERRAGDDVQKLTDKFIGEIEKALEAKEADLMAV.

Belongs to the RRF family.

The protein resides in the cytoplasm. Functionally, responsible for the release of ribosomes from messenger RNA at the termination of protein biosynthesis. May increase the efficiency of translation by recycling ribosomes from one round of translation to another. This chain is Ribosome-recycling factor, found in Pseudomonas paraeruginosa (strain DSM 24068 / PA7) (Pseudomonas aeruginosa (strain PA7)).